The primary structure comprises 531 residues: CCA tRNA nucleotidyltransferase, mitochondrial (531 aa).

The protein belongs to the tRNA nucleotidyltransferase/poly(A) polymerase family.

Its subcellular location is the mitochondrion. The protein localises to the cytoplasm. The protein resides in the nucleus. It catalyses the reaction a tRNA precursor + 2 CTP + ATP = a tRNA with a 3' CCA end + 3 diphosphate. In terms of biological role, nucleotidyltransferase that catalyzes the addition and repair of the essential 3'-terminal CCA sequence in tRNAs, which is necessary for the attachment of amino acids to the 3' terminus of tRNA molecules, using CTP and ATP as substrates. tRNA 3'-terminal CCA addition is required both for tRNA processing and repair. Also involved in tRNA surveillance by mediating tandem CCA addition to generate a CCACCA at the 3' terminus of unstable tRNAs. While stable tRNAs receive only 3'-terminal CCA, unstable tRNAs are marked with CCACCA and rapidly degraded. The structural flexibility of RNA controls the choice between CCA versus CCACCA addition: following the first CCA addition cycle, nucleotide-binding to the active site triggers a clockwise screw motion, producing torque on the RNA. This ejects stable RNAs, whereas unstable RNAs are refolded while bound to the enzyme and subjected to a second CCA catalytic cycle. This is CCA tRNA nucleotidyltransferase, mitochondrial (CCA1) from Candida glabrata (strain ATCC 2001 / BCRC 20586 / JCM 3761 / NBRC 0622 / NRRL Y-65 / CBS 138) (Yeast).